A 112-amino-acid polypeptide reads, in one-letter code: UPF0145 protein RB3016 (112 aa).

This sequence belongs to the UPF0145 family.

This chain is UPF0145 protein RB3016, found in Rhodopirellula baltica (strain DSM 10527 / NCIMB 13988 / SH1).